A 204-amino-acid chain; its full sequence is Lysozyme G (204 aa).

The signal sequence occupies residues 1-19; the sequence is MHLMLVLLGLAALLGTSQS. Intrachain disulfides connect Cys-23-Cys-79 and Cys-37-Cys-48. Residues Glu-92 and Asp-105 contribute to the active site.

It belongs to the glycosyl hydrolase 23 family.

The protein resides in the secreted. The catalysed reaction is Hydrolysis of (1-&gt;4)-beta-linkages between N-acetylmuramic acid and N-acetyl-D-glucosamine residues in a peptidoglycan and between N-acetyl-D-glucosamine residues in chitodextrins.. Has bacteriolytic activity against M.luteus. This Dromaius novaehollandiae (Emu) protein is Lysozyme G.